A 312-amino-acid chain; its full sequence is Zinc finger CCCH domain-containing protein 25 (312 aa).

An RRM domain is found at 36 to 114; the sequence is AYVFVGGIPY…RIVRVDHVSK (79 aa). The C3H1-type zinc-finger motif lies at 130-157; that stretch reads REARGVCYAFQKGECNRGASCRYSHDEQ. The interval 153–312 is disordered; that stretch reads SHDEQRNANT…DSERYRKSRR (160 aa). Basic and acidic residues-rich tracts occupy residues 166-184, 197-210, and 219-312; these read SKEE…EPPM, RFPD…KSTG, and EAYK…KSRR.

This Oryza sativa subsp. japonica (Rice) protein is Zinc finger CCCH domain-containing protein 25.